The sequence spans 238 residues: Cysteine-rich venom protein kaouthin-2 (238 aa).

The N-terminal stretch at 1 to 19 is a signal peptide; it reads MIAFIVLLSLAAVLQQSSG. The propeptide occupies 20–25; the sequence is TVDFAS. The SCP domain maps to 38–164; it reads VDKHNALRRS…SSKYLYVCQY (127 aa). 8 disulfides stabilise this stretch: Cys-75-Cys-153, Cys-92-Cys-165, Cys-148-Cys-162, Cys-184-Cys-191, Cys-187-Cys-196, Cys-200-Cys-233, Cys-209-Cys-227, and Cys-218-Cys-231. The ShKT domain maps to 200-233; sequence CKHHNVFSNCQSLAKQNACQTEWMKSKCAASCFC.

In terms of tissue distribution, expressed by the venom gland.

The protein resides in the secreted. The polypeptide is Cysteine-rich venom protein kaouthin-2 (Naja kaouthia (Monocled cobra)).